The primary structure comprises 56 residues: UPF0434 protein CbuK_1382 (56 aa).

It belongs to the UPF0434 family.

This is UPF0434 protein CbuK_1382 from Coxiella burnetii (strain CbuK_Q154) (Coxiella burnetii (strain Q154)).